Here is a 557-residue protein sequence, read N- to C-terminus: Urocanate hydratase (557 aa).

Residues 53 to 54, Q131, 177 to 179, 197 to 202, 243 to 244, 264 to 268, 274 to 275, and 323 to 324 each bind NAD(+); these read GG, GMG, ECQQSR, NA, QTSAH, YL, and YG. C411 is an active-site residue. Residues 455–456 and G493 contribute to the NAD(+) site; that span reads RE.

In terms of assembly, homodimer. Requires NAD(+) as cofactor.

It is found in the cytoplasm. It carries out the reaction 4-imidazolone-5-propanoate = trans-urocanate + H2O. Its pathway is amino-acid degradation; L-histidine degradation into L-glutamate; N-formimidoyl-L-glutamate from L-histidine: step 2/3. Its function is as follows. Catalyzes the conversion of urocanate to 4-imidazolone-5-propionate. The chain is Urocanate hydratase from Pseudomonas putida (Arthrobacter siderocapsulatus).